Here is a 106-residue protein sequence, read N- to C-terminus: uncharacterized protein (106 aa).

It belongs to the HesB/IscA family.

This is an uncharacterized protein from Sinorhizobium fredii (strain NBRC 101917 / NGR234).